The chain runs to 196 residues: Protease (196 aa).

Residues H54, D70, and C121 contribute to the active site.

This sequence belongs to the peptidase C5 family. In terms of assembly, interacts with protease cofactor pVI-C; this interaction is necessary for protease activation.

Its subcellular location is the virion. It localises to the host nucleus. The enzyme catalyses Cleaves proteins of the adenovirus and its host cell at two consensus sites: -Yaa-Xaa-Gly-Gly-|-Xaa- and -Yaa-Xaa-Gly-Xaa-|-Gly- (in which Yaa is Met, Ile or Leu, and Xaa is any amino acid).. Its activity is regulated as follows. Requires DNA and protease cofactor for maximal activation. Inside nascent virions, becomes partially activated by binding to the viral DNA, allowing it to cleave the cofactor that binds to the protease and fully activates it. Actin, like the viral protease cofactor, seems to act as a cofactor in the cleavage of cytokeratin 18 and of actin itself. Functionally, cleaves viral precursor proteins (pTP, pIIIa, pVI, pVII, pVIII, and pX) inside newly assembled particles giving rise to mature virions. Protease complexed to its cofactor slides along the viral DNA to specifically locate and cleave the viral precursors. Mature virions have a weakened organization compared to the unmature virions, thereby facilitating subsequent uncoating. Without maturation, the particle lacks infectivity and is unable to uncoat. Late in adenovirus infection, in the cytoplasm, may participate in the cytoskeleton destruction. Cleaves host cell cytoskeletal keratins K7 and K18. This is Protease from Bos taurus (Bovine).